Consider the following 184-residue polypeptide: Translation initiation factor IF-3 (184 aa).

The protein belongs to the IF-3 family. As to quaternary structure, monomer.

It localises to the cytoplasm. Its function is as follows. IF-3 binds to the 30S ribosomal subunit and shifts the equilibrium between 70S ribosomes and their 50S and 30S subunits in favor of the free subunits, thus enhancing the availability of 30S subunits on which protein synthesis initiation begins. This is Translation initiation factor IF-3 from Hamiltonella defensa subsp. Acyrthosiphon pisum (strain 5AT).